The chain runs to 446 residues: Probable rhamnogalacturonase A (446 aa).

The first 18 residues, 1 to 18 (MPALPILALALAPLLVNG), serve as a signal peptide directing secretion. Cys39 and Cys65 are disulfide-bonded. N-linked (GlcNAc...) asparagine glycans are attached at residues Asn50, Asn115, and Asn124. The Proton donor role is filled by Asp216. A disulfide bond links Cys218 and Cys235. 2 N-linked (GlcNAc...) asparagine glycosylation sites follow: Asn236 and Asn281. His291 is a catalytic residue. An N-linked (GlcNAc...) asparagine glycan is attached at Asn318. Disulfide bonds link Cys341–Cys347 and Cys369–Cys378.

It belongs to the glycosyl hydrolase 28 family.

The protein localises to the secreted. The catalysed reaction is Endohydrolysis of alpha-D-GalA-(1-&gt;2)-alpha-L-Rha glycosidic bond in the rhamnogalacturonan I backbone with initial inversion of anomeric configuration releasing oligosaccharides with beta-D-GalA at the reducing end.. Pectinolytic enzymes consist of four classes of enzymes: pectine lyase, polygalacturonase, pectin methylesterase and rhamnogalacturonase. Hydrolyzes alpha-D-galacturonopyranosyl-(1,2)-alpha-L-rhamnopyranosyl linkages in the backbone of the hairy regions of pectins. The protein is Probable rhamnogalacturonase A (rhgA) of Aspergillus niger (strain ATCC MYA-4892 / CBS 513.88 / FGSC A1513).